Consider the following 40-residue polypeptide: MANTTGRIPLWLVGTVTGTLVIGLMGIFFYGAYSGLGSSL.

A helical transmembrane segment spans residues 8-28 (IPLWLVGTVTGTLVIGLMGIF).

This sequence belongs to the PsbJ family. As to quaternary structure, PSII is composed of 1 copy each of membrane proteins PsbA, PsbB, PsbC, PsbD, PsbE, PsbF, PsbH, PsbI, PsbJ, PsbK, PsbL, PsbM, PsbT, PsbX, PsbY, PsbZ, Psb30/Ycf12, at least 3 peripheral proteins of the oxygen-evolving complex and a large number of cofactors. It forms dimeric complexes.

It is found in the plastid. The protein localises to the chloroplast thylakoid membrane. Its function is as follows. One of the components of the core complex of photosystem II (PSII). PSII is a light-driven water:plastoquinone oxidoreductase that uses light energy to abstract electrons from H(2)O, generating O(2) and a proton gradient subsequently used for ATP formation. It consists of a core antenna complex that captures photons, and an electron transfer chain that converts photonic excitation into a charge separation. In Psilotum nudum (Whisk fern), this protein is Photosystem II reaction center protein J.